Reading from the N-terminus, the 331-residue chain is Ketol-acid reductoisomerase (NADP(+)) (331 aa).

One can recognise a KARI N-terminal Rossmann domain in the interval 2–182 (AKIYTDKDAS…GATRAGVIET (181 aa)). Residues 25–28 (YGIQ), R48, S53, and 83–86 (DMEQ) contribute to the NADP(+) site. The active site involves H108. Residue G134 coordinates NADP(+). The KARI C-terminal knotted domain occupies 183–328 (TFAEETETDL…AEMRKLLFGR (146 aa)). Residues D191, E195, E227, and E231 each contribute to the Mg(2+) site. S252 is a substrate binding site.

Belongs to the ketol-acid reductoisomerase family. Mg(2+) serves as cofactor.

The enzyme catalyses (2R)-2,3-dihydroxy-3-methylbutanoate + NADP(+) = (2S)-2-acetolactate + NADPH + H(+). The catalysed reaction is (2R,3R)-2,3-dihydroxy-3-methylpentanoate + NADP(+) = (S)-2-ethyl-2-hydroxy-3-oxobutanoate + NADPH + H(+). Its pathway is amino-acid biosynthesis; L-isoleucine biosynthesis; L-isoleucine from 2-oxobutanoate: step 2/4. It participates in amino-acid biosynthesis; L-valine biosynthesis; L-valine from pyruvate: step 2/4. Involved in the biosynthesis of branched-chain amino acids (BCAA). Catalyzes an alkyl-migration followed by a ketol-acid reduction of (S)-2-acetolactate (S2AL) to yield (R)-2,3-dihydroxy-isovalerate. In the isomerase reaction, S2AL is rearranged via a Mg-dependent methyl migration to produce 3-hydroxy-3-methyl-2-ketobutyrate (HMKB). In the reductase reaction, this 2-ketoacid undergoes a metal-dependent reduction by NADPH to yield (R)-2,3-dihydroxy-isovalerate. In Pyrobaculum islandicum (strain DSM 4184 / JCM 9189 / GEO3), this protein is Ketol-acid reductoisomerase (NADP(+)).